We begin with the raw amino-acid sequence, 288 residues long: 33 kDa chaperonin (288 aa).

Intrachain disulfides connect C235-C237 and C268-C271.

This sequence belongs to the HSP33 family. In terms of processing, under oxidizing conditions two disulfide bonds are formed involving the reactive cysteines. Under reducing conditions zinc is bound to the reactive cysteines and the protein is inactive.

The protein resides in the cytoplasm. In terms of biological role, redox regulated molecular chaperone. Protects both thermally unfolding and oxidatively damaged proteins from irreversible aggregation. Plays an important role in the bacterial defense system toward oxidative stress. This chain is 33 kDa chaperonin, found in Streptococcus suis (strain 98HAH33).